Here is a 31-residue protein sequence, read N- to C-terminus: Photosystem II reaction center protein T (31 aa).

A helical transmembrane segment spans residues 3–23; that stretch reads ALVYTFLLIGTLGVIFFAIFF.

It belongs to the PsbT family. As to quaternary structure, PSII is composed of 1 copy each of membrane proteins PsbA, PsbB, PsbC, PsbD, PsbE, PsbF, PsbH, PsbI, PsbJ, PsbK, PsbL, PsbM, PsbT, PsbY, PsbZ, Psb30/Ycf12, at least 3 peripheral proteins of the oxygen-evolving complex and a large number of cofactors. It forms dimeric complexes.

It localises to the plastid. Its subcellular location is the chloroplast thylakoid membrane. In terms of biological role, found at the monomer-monomer interface of the photosystem II (PS II) dimer, plays a role in assembly and dimerization of PSII. PSII is a light-driven water plastoquinone oxidoreductase, using light energy to abstract electrons from H(2)O, generating a proton gradient subsequently used for ATP formation. The polypeptide is Photosystem II reaction center protein T (Euglena gracilis).